The sequence spans 113 residues: UPF0060 membrane protein Arth_4423 (113 aa).

4 helical membrane-spanning segments follow: residues 7 to 27, 33 to 53, 62 to 82, and 91 to 111; these read VLLF…VWQA, AWWW…VATL, ILAA…MVFD, and VIGS…PRGT.

Belongs to the UPF0060 family.

The protein localises to the cell membrane. The protein is UPF0060 membrane protein Arth_4423 of Arthrobacter sp. (strain FB24).